The primary structure comprises 481 residues: Cardiolipin synthase A (481 aa).

2 consecutive transmembrane segments (helical) span residues 10–30 and 40–60; these read FFGY…LHAL and IAWA…YLIF. PLD phosphodiesterase domains are found at residues 220 to 247 and 394 to 421; these read VNFR…GDEY and QPGF…DNRS. Catalysis depends on residues His-225, Lys-227, Asp-232, His-399, Lys-401, and Asp-406.

It belongs to the phospholipase D family. Cardiolipin synthase subfamily. ClsA sub-subfamily.

It is found in the cell inner membrane. It carries out the reaction 2 a 1,2-diacyl-sn-glycero-3-phospho-(1'-sn-glycerol) = a cardiolipin + glycerol. Functionally, catalyzes the reversible phosphatidyl group transfer from one phosphatidylglycerol molecule to another to form cardiolipin (CL) (diphosphatidylglycerol) and glycerol. This Pseudomonas putida (Arthrobacter siderocapsulatus) protein is Cardiolipin synthase A.